The chain runs to 170 residues: Lipoprotein signal peptidase (170 aa).

Helical transmembrane passes span 12-32, 67-87, and 94-116; these read WYWV…WVLS, WQRW…SVWL, and MWRL…IDRL. Active-site residues include D123 and D141. A helical membrane pass occupies residues 133-153; that stretch reads HFPAFNIADSAICVGAALIIL.

Belongs to the peptidase A8 family.

The protein resides in the cell inner membrane. It carries out the reaction Release of signal peptides from bacterial membrane prolipoproteins. Hydrolyzes -Xaa-Yaa-Zaa-|-(S,diacylglyceryl)Cys-, in which Xaa is hydrophobic (preferably Leu), and Yaa (Ala or Ser) and Zaa (Gly or Ala) have small, neutral side chains.. It functions in the pathway protein modification; lipoprotein biosynthesis (signal peptide cleavage). Functionally, this protein specifically catalyzes the removal of signal peptides from prolipoproteins. The chain is Lipoprotein signal peptidase from Shewanella halifaxensis (strain HAW-EB4).